Reading from the N-terminus, the 617-residue chain is KIF-binding protein (617 aa).

The disordered stretch occupies residues 48-83 (ALLGPAPEDEDEPAADDGPGDQALGAGEPREAEGPG). Over residues 54–66 (PEDEDEPAADDGP) the composition is skewed to acidic residues. Ser-174 is modified (phosphoserine).

Belongs to the KIF-binding protein family. Interacts with KIF1B; positively regulates KIF1B microtubule motor activity. Interacts with STMN2. In the embryo it is expressed in cortical neurons; expression increases during neuronal development.

The protein resides in the cytoplasm. It localises to the cytoskeleton. Functionally, activator of KIF1B plus-end-directed microtubule motor activity. Required for organization of axonal microtubules, and axonal outgrowth and maintenance during peripheral and central nervous system development. The sequence is that of KIF-binding protein from Mus musculus (Mouse).